The primary structure comprises 31 residues: Photosystem II reaction center protein T (31 aa).

The helical transmembrane segment at 3-23 (ALVYTFLLIGTLGIIFFAIFF) threads the bilayer.

Belongs to the PsbT family. In terms of assembly, PSII is composed of 1 copy each of membrane proteins PsbA, PsbB, PsbC, PsbD, PsbE, PsbF, PsbH, PsbI, PsbJ, PsbK, PsbL, PsbM, PsbT, PsbY, PsbZ, Psb30/Ycf12, at least 3 peripheral proteins of the oxygen-evolving complex and a large number of cofactors. It forms dimeric complexes.

The protein localises to the plastid. It localises to the chloroplast thylakoid membrane. Functionally, found at the monomer-monomer interface of the photosystem II (PS II) dimer, plays a role in assembly and dimerization of PSII. PSII is a light-driven water plastoquinone oxidoreductase, using light energy to abstract electrons from H(2)O, generating a proton gradient subsequently used for ATP formation. The protein is Photosystem II reaction center protein T of Stigeoclonium helveticum (Green alga).